Consider the following 471-residue polypeptide: 3-isopropylmalate dehydratase large subunit (471 aa).

[4Fe-4S] cluster-binding residues include C349, C409, and C412.

Belongs to the aconitase/IPM isomerase family. LeuC type 1 subfamily. As to quaternary structure, heterodimer of LeuC and LeuD. [4Fe-4S] cluster serves as cofactor.

The enzyme catalyses (2R,3S)-3-isopropylmalate = (2S)-2-isopropylmalate. It participates in amino-acid biosynthesis; L-leucine biosynthesis; L-leucine from 3-methyl-2-oxobutanoate: step 2/4. Functionally, catalyzes the isomerization between 2-isopropylmalate and 3-isopropylmalate, via the formation of 2-isopropylmaleate. The sequence is that of 3-isopropylmalate dehydratase large subunit from Aliivibrio salmonicida (strain LFI1238) (Vibrio salmonicida (strain LFI1238)).